We begin with the raw amino-acid sequence, 384 residues long: Mitogen-activated protein kinase 8 (384 aa).

Positions 26–321 constitute a Protein kinase domain; it reads YQNLKPIGSG…VDEALQHPYI (296 aa). ATP-binding positions include 32 to 40 and lysine 55; that span reads IGSGAQGIV. The residue at position 116 (cysteine 116) is an S-nitrosocysteine. The Proton acceptor role is filled by aspartate 151. Threonine 183 carries the post-translational modification Phosphothreonine; by MAP2K7. The short motif at 183–185 is the TXY element; the sequence is TPY. At tyrosine 185 the chain carries Phosphotyrosine; by MAP2K4. Serine 377 carries the post-translational modification Phosphoserine.

The protein belongs to the protein kinase superfamily. CMGC Ser/Thr protein kinase family. MAP kinase subfamily. Binds to at least four scaffolding proteins, MAPK8IP1/JIP-1, MAPK8IP2/JIP-2, MAPK8IP3/JIP-3/JSAP1 and SPAG9/MAPK8IP4/JIP-4. These proteins also bind other components of the JNK signaling pathway. Forms a complex with MAPK8IP1 and ARHGEF28. Interacts with TP53 and WWOX. Interacts with JAMP. Interacts with NFATC4. Interacts with MECOM; regulates JNK signaling. Interacts with PIN1; this interaction mediates MAPK8 conformational changes leading to the binding of MAPK8 to its substrates. Interacts with HSF1 (via D domain and preferentially with hyperphosphorylated form); this interaction occurs under both normal growth conditions and immediately upon heat shock. Interacts (phosphorylated form) with NFE2; the interaction phosphorylates NFE2 in undifferentiated cells. Interacts with GRIPAP1. Interacts with POU5F1; phosphorylates POU5F1 at 'Ser-347'. Found in a complex with SH3RF1, RAC1, MAP3K11/MLK3, MAP2K7/MKK7 and MAPK8IP1/JIP1. Found in a complex with SH3RF1, RAC2, MAP3K7/TAK1, MAP2K7/MKK7, MAPK8IP1/JIP1 and MAPK9/JNK2. It depends on Mg(2+) as a cofactor. In terms of processing, phosphorylated by TAOK2. Dually phosphorylated on Thr-183 and Tyr-185 by MAP2K7 and MAP2K4, which activates the enzyme. May be phosphorylated at Thr-183 and Tyr-185 by MAP3K1/MEKK1. Phosphorylated form is more concentrated at synapses than none-phosphorylated. Brain (at protein level).

The protein localises to the cytoplasm. It localises to the nucleus. The protein resides in the synapse. It catalyses the reaction L-seryl-[protein] + ATP = O-phospho-L-seryl-[protein] + ADP + H(+). The enzyme catalyses L-threonyl-[protein] + ATP = O-phospho-L-threonyl-[protein] + ADP + H(+). Inhibited by SERPINB3. Activated by threonine and tyrosine phosphorylation by either of two dual specificity kinases, MAP2K4 and MAP2K7. MAP2K4 shows a strong preference for Tyr-185 while MAP2K7 phosphorylates Tyr-183 preferentially. Inhibited by dual specificity phosphatases, such as DUSP1. Serine/threonine-protein kinase involved in various processes such as cell proliferation, differentiation, migration, transformation and programmed cell death. Extracellular stimuli such as pro-inflammatory cytokines or physical stress stimulate the stress-activated protein kinase/c-Jun N-terminal kinase (SAP/JNK) signaling pathway. In this cascade, two dual specificity kinases MAP2K4/MKK4 and MAP2K7/MKK7 phosphorylate and activate MAPK8/JNK1. In turn, MAPK8/JNK1 phosphorylates a number of transcription factors, primarily components of AP-1 such as JUN, JDP2 and ATF2 and thus regulates AP-1 transcriptional activity. Phosphorylates the replication licensing factor CDT1, inhibiting the interaction between CDT1 and the histone H4 acetylase HBO1 to replication origins. Loss of this interaction abrogates the acetylation required for replication initiation. Promotes stressed cell apoptosis by phosphorylating key regulatory factors including p53/TP53 and Yes-associates protein YAP1. In T-cells, MAPK8 and MAPK9 are required for polarized differentiation of T-helper cells into Th1 cells. Contributes to the survival of erythroid cells by phosphorylating the antagonist of cell death BAD upon EPO stimulation. Mediates starvation-induced BCL2 phosphorylation, BCL2 dissociation from BECN1, and thus activation of autophagy. Phosphorylates STMN2 and hence regulates microtubule dynamics, controlling neurite elongation in cortical neurons. In the developing brain, through its cytoplasmic activity on STMN2, negatively regulates the rate of exit from multipolar stage and of radial migration from the ventricular zone. Phosphorylates several other substrates including heat shock factor protein 4 (HSF4), the deacetylase SIRT1, ELK1, or the E3 ligase ITCH. Phosphorylates the CLOCK-BMAL1 heterodimer and plays a role in the regulation of the circadian clock. Phosphorylates the heat shock transcription factor HSF1, suppressing HSF1-induced transcriptional activity. Phosphorylates POU5F1, which results in the inhibition of POU5F1's transcriptional activity and enhances its proteasomal degradation. Phosphorylates JUND and this phosphorylation is inhibited in the presence of MEN1. In neurons, phosphorylates SYT4 which captures neuronal dense core vesicles at synapses. Phosphorylates EIF4ENIF1/4-ET in response to oxidative stress, promoting P-body assembly. Phosphorylates SIRT6 in response to oxidative stress, stimulating its mono-ADP-ribosyltransferase activity. Phosphorylates NLRP3, promoting assembly of the NLRP3 inflammasome. Phosphorylates ALKBH5 in response to reactive oxygen species (ROS), promoting ALKBH5 sumoylation and inactivation. The chain is Mitogen-activated protein kinase 8 (Mapk8) from Mus musculus (Mouse).